We begin with the raw amino-acid sequence, 289 residues long: MKLSFTKMHGAGNDFVVLDGYTRALPPLTGAQVRALADRHFGIGADQLLLVEKPTVDGADFKYRIFNCDGGEVEHCGNGARCFVKFVRDHGLTGKASVRVEVKHGVITLTMQDNGEVVVDMGAPVFEPARVPFDASGLDGRREGADTLWPLPVNGVTRWISVVSMGNPHAVQIVDDAEAFAVRVDGPAIERDPRFPQRVNAGFMQVVSRHEVNLRVYERGAGETLACGTGACAAVAAGIRRGRLDSPVTVHTHGGTLTISWNGARDERAPLMMAGPATTVFEGVIELPA.

Substrate-binding residues include Asn13, Gln47, and Asn67. The Proton donor role is filled by Cys76. Residues 77–78, Asn167, Asn200, and 218–219 each bind substrate; these read GN and ER. The Proton acceptor role is filled by Cys227. A substrate-binding site is contributed by 228–229; it reads GT.

This sequence belongs to the diaminopimelate epimerase family. As to quaternary structure, homodimer.

It is found in the cytoplasm. It carries out the reaction (2S,6S)-2,6-diaminopimelate = meso-2,6-diaminopimelate. It participates in amino-acid biosynthesis; L-lysine biosynthesis via DAP pathway; DL-2,6-diaminopimelate from LL-2,6-diaminopimelate: step 1/1. Its function is as follows. Catalyzes the stereoinversion of LL-2,6-diaminopimelate (L,L-DAP) to meso-diaminopimelate (meso-DAP), a precursor of L-lysine and an essential component of the bacterial peptidoglycan. This chain is Diaminopimelate epimerase, found in Burkholderia pseudomallei (strain 668).